Reading from the N-terminus, the 187-residue chain is Transmembrane protein 17A (187 aa).

4 consecutive transmembrane segments (helical) span residues 49 to 69 (IFLY…VIML), 82 to 102 (FILV…LYLG), 114 to 134 (LAGF…FLLC), and 146 to 166 (AVHG…IFAL).

The protein belongs to the TMEM17 family. In terms of assembly, part of the tectonic-like complex (also named B9 complex).

The protein resides in the cell projection. Its subcellular location is the cilium membrane. Functionally, transmembrane component of the tectonic-like complex, a complex localized at the transition zone of primary cilia and acting as a barrier that prevents diffusion of transmembrane proteins between the cilia and plasma membranes. Required for ciliogenesis and sonic hedgehog/SHH signaling. The sequence is that of Transmembrane protein 17A (tmem17-a) from Xenopus tropicalis (Western clawed frog).